The primary structure comprises 2194 residues: Supervillin (2194 aa).

An interaction with MYLK region spans residues 1–174; the sequence is MKRKERIARR…SSYSRTELSG (174 aa). Disordered regions lie at residues 35–98, 118–335, 388–414, 450–500, 513–563, 589–667, 685–719, and 739–791; these read LEED…TQSL, EKYG…QRRH, PESI…KVLE, EDRG…TERM, AVSQ…QTSK, RASR…KVDE, KSFD…QPVT, and HPVM…DSST. Residue Ser50 is modified to Phosphoserine. The segment covering 87 to 98 has biased composition (polar residues); that stretch reads PYSSGIMDTQSL. 2 stretches are compositionally biased toward basic and acidic residues: residues 139–161 and 181–192; these read SRKD…ESSR and ESKDYGLHRSDG. Phosphoserine is present on residues Ser245 and Ser262. 2 stretches are compositionally biased toward basic and acidic residues: residues 283–294 and 308–319; these read PKHEWFLQKDSE and KVREKLVREESA. A compositionally biased stretch (polar residues) spans 320 to 330; the sequence is RSSPELTSESL. A phosphoserine mark is found at Ser321 and Ser322. Polar residues predominate over residues 455–467; that stretch reads GRSQEAPSGTEDL. Low complexity predominate over residues 540–551; the sequence is PPQLQALKAKAP. 2 stretches are compositionally biased toward basic and acidic residues: residues 592–615 and 626–635; these read RKPE…ERGS and ENRKTSERFR. A phosphoserine mark is found at Ser652 and Ser686. Residues 704–714 show a composition bias toward basic and acidic residues; sequence QRLRRLQDRSH. Residues Ser747 and Ser781 each carry the phosphoserine modification. Positions 770 to 782 are enriched in basic and acidic residues; sequence LARDQTNESKDSA. Tyr829 carries the phosphotyrosine modification. Phosphothreonine is present on Thr831. Phosphoserine is present on residues Ser893, Ser899, Ser903, Ser947, Ser979, and Ser1031. Positions 1036–1077 are disordered; the sequence is EFGEPTSEQTGAAAGKPAAPTATPVSWKPQDPSEQPQEKRYQ. The span at 1045-1059 shows a compositional bias: low complexity; that stretch reads TGAAAGKPAAPTATP. Phosphoserine is present on residues Ser1099 and Ser1205. Thr1210 is subject to Phosphothreonine. Phosphoserine is present on residues Ser1214, Ser1302, and Ser1385. Residues 1399–1667 form an interaction with NEB region; it reads SNVSLRSVNL…KFLDWTELKR (269 aa). Gelsolin-like repeat units lie at residues 1421-1520, 1540-1662, 1732-1842, 1861-1962, and 1995-2102; these read KKLM…LGGQ, IETN…FLDW, ISVD…FQGG, WRLY…LGRR, and ATEF…FPSW. An HP domain is found at 2131 to 2194; that stretch reads KLCKTIYPLA…VNLKKAKGLF (64 aa).

Belongs to the villin/gelsolin family. As to quaternary structure, associates with F-actin. Interacts with NEB. Interacts with MYH9. Interacts with MYLK. Interacts with TASOR. Interacts with TRIP6 and DYNLT1. Interacts with KIF14; at midbody during cytokinesis.

Its subcellular location is the cell membrane. The protein resides in the cytoplasm. The protein localises to the cytoskeleton. It is found in the cell projection. It localises to the invadopodium. Its subcellular location is the podosome. The protein resides in the midbody. The protein localises to the cleavage furrow. Its function is as follows. Forms a high-affinity link between the actin cytoskeleton and the membrane. Is among the first costameric proteins to assemble during myogenesis and it contributes to myogenic membrane structure and differentiation. Appears to be involved in myosin II assembly. May modulate myosin II regulation through MLCK during cell spreading, an initial step in cell migration. May play a role in invadopodial function. May be involved in modulation of focal adhesions. Supervillin-mediated down-regulation of focal adhesions involves binding to TRIP6. Plays a role in cytokinesis through KIF14 interaction. In Bos taurus (Bovine), this protein is Supervillin.